The sequence spans 467 residues: Light-independent protochlorophyllide reductase subunit N (467 aa).

[4Fe-4S] cluster contacts are provided by cysteine 22, cysteine 47, and cysteine 107.

It belongs to the BchN/ChlN family. As to quaternary structure, protochlorophyllide reductase is composed of three subunits; ChlL, ChlN and ChlB. Forms a heterotetramer of two ChlB and two ChlN subunits. [4Fe-4S] cluster serves as cofactor.

It is found in the plastid. The protein resides in the chloroplast. The enzyme catalyses chlorophyllide a + oxidized 2[4Fe-4S]-[ferredoxin] + 2 ADP + 2 phosphate = protochlorophyllide a + reduced 2[4Fe-4S]-[ferredoxin] + 2 ATP + 2 H2O. It participates in porphyrin-containing compound metabolism; chlorophyll biosynthesis (light-independent). Component of the dark-operative protochlorophyllide reductase (DPOR) that uses Mg-ATP and reduced ferredoxin to reduce ring D of protochlorophyllide (Pchlide) to form chlorophyllide a (Chlide). This reaction is light-independent. The NB-protein (ChlN-ChlB) is the catalytic component of the complex. The sequence is that of Light-independent protochlorophyllide reductase subunit N from Pinus thunbergii (Japanese black pine).